A 125-amino-acid chain; its full sequence is Small ribosomal subunit protein uS13 (125 aa).

It belongs to the universal ribosomal protein uS13 family. In terms of assembly, part of the 30S ribosomal subunit. Forms a loose heterodimer with protein S19. Forms two bridges to the 50S subunit in the 70S ribosome.

Functionally, located at the top of the head of the 30S subunit, it contacts several helices of the 16S rRNA. In the 70S ribosome it contacts the 23S rRNA (bridge B1a) and protein L5 of the 50S subunit (bridge B1b), connecting the 2 subunits; these bridges are implicated in subunit movement. Contacts the tRNAs in the A and P-sites. The protein is Small ribosomal subunit protein uS13 of Rickettsia rickettsii (strain Iowa).